Consider the following 54-residue polypeptide: Large ribosomal subunit protein bL33B (54 aa).

The protein belongs to the bacterial ribosomal protein bL33 family.

The polypeptide is Large ribosomal subunit protein bL33B (Myxococcus xanthus (strain DK1622)).